We begin with the raw amino-acid sequence, 230 residues long: Putative transcription factor bHLH107 (230 aa).

Positions 44–93 constitute a bHLH domain; the sequence is ASLRNHKEAERKRRARINSHLNKLRKLLSCNSKTDKSTLLAKVVQRVKEL.

In terms of assembly, homodimer.

The protein resides in the nucleus. This Arabidopsis thaliana (Mouse-ear cress) protein is Putative transcription factor bHLH107 (BHLH107).